The following is a 279-amino-acid chain: MFLDPVINFFGTVLEMFRSGGVITYLIAAIGIYGFITALEKIHYLRKISRVSTPQIIGAVNESMEKGGALEALREIGQYQNPVSKIISEALKIGYRNRSEVEDAMERVFIVEMSNMTRGLGTLRTIIEVAPMLGLIGTVIGIWYTFRALGVNADPAAMAEGIYVALITTILGLAVAIILMPLYSYITGRIDDEIDKIELIKKMTNWGYAVMRISVEGNVDDVVKALMESDGVVSVRVVDEPDANVVVAFKPSMLEKSINNIIIERCGKSAEIIESKLRQ.

The next 3 membrane-spanning stretches (helical) occupy residues 19-39 (SGGVITYLIAAIGIYGFITAL), 126-146 (IIEVAPMLGLIGTVIGIWYTF), and 162-182 (IYVALITTILGLAVAIILMPL).

It belongs to the ExbB/TolQ family.

It is found in the cell membrane. This Methanothermobacter thermautotrophicus (strain ATCC 29096 / DSM 1053 / JCM 10044 / NBRC 100330 / Delta H) (Methanobacterium thermoautotrophicum) protein is Putative biopolymer transport protein ExbB homolog.